The primary structure comprises 90 residues: [Leu8]-phyllolitorin (90 aa).

An N-terminal signal peptide occupies residues methionine 1–cysteine 30. The propeptide occupies lysine 31 to arginine 48. A Pyrrolidone carboxylic acid modification is found at glutamine 49. Methionine 57 carries the methionine amide modification. Residues serine 61 to aspartate 90 constitute a propeptide that is removed on maturation.

It belongs to the bombesin/neuromedin-B/ranatensin family. In terms of tissue distribution, expressed by the skin glands.

It localises to the secreted. The polypeptide is [Leu8]-phyllolitorin (Phyllomedusa sauvagei (Sauvage's leaf frog)).